The sequence spans 139 residues: Cytochrome c-type biogenesis protein CcmE 2 (139 aa).

Residues 1–9 are Cytoplasmic-facing; the sequence is MASLKKSRR. A helical; Signal-anchor for type II membrane protein membrane pass occupies residues 10-30; sequence VRLILFSGVALVSATALIGYA. Topologically, residues 31–139 are periplasmic; that stretch reads MRDGIQFFRT…ELAEMEALRD (109 aa). Histidine 122 and tyrosine 126 together coordinate heme.

It belongs to the CcmE/CycJ family.

Its subcellular location is the cell inner membrane. Heme chaperone required for the biogenesis of c-type cytochromes. Transiently binds heme delivered by CcmC and transfers the heme to apo-cytochromes in a process facilitated by CcmF and CcmH. The polypeptide is Cytochrome c-type biogenesis protein CcmE 2 (Ruegeria pomeroyi (strain ATCC 700808 / DSM 15171 / DSS-3) (Silicibacter pomeroyi)).